Consider the following 367-residue polypeptide: tRNA-specific 2-thiouridylase MnmA (367 aa).

Residues Ala-14–Ser-21 and Leu-40 contribute to the ATP site. Cys-108 (nucleophile) is an active-site residue. A disulfide bridge connects residues Cys-108 and Cys-204. Gly-132 serves as a coordination point for ATP. The interaction with tRNA stretch occupies residues Lys-154–Gln-156. The active-site Cysteine persulfide intermediate is the Cys-204.

This sequence belongs to the MnmA/TRMU family.

The protein localises to the cytoplasm. The enzyme catalyses S-sulfanyl-L-cysteinyl-[protein] + uridine(34) in tRNA + AH2 + ATP = 2-thiouridine(34) in tRNA + L-cysteinyl-[protein] + A + AMP + diphosphate + H(+). In terms of biological role, catalyzes the 2-thiolation of uridine at the wobble position (U34) of tRNA, leading to the formation of s(2)U34. This chain is tRNA-specific 2-thiouridylase MnmA, found in Rickettsia bellii (strain OSU 85-389).